Here is a 628-residue protein sequence, read N- to C-terminus: NUAK family SNF1-like kinase 2 (628 aa).

M1 carries the post-translational modification N-acetylmethionine. The 251-residue stretch at 53 to 303 (YEFLETLGKG…LEDVASHWWV (251 aa)) folds into the Protein kinase domain. Residues 59-67 (LGKGTYGKV) and K81 contribute to the ATP site. Catalysis depends on D175, which acts as the Proton acceptor. T208 is subject to Phosphothreonine; by LKB1. The interval 355-493 (KQHAPGGGST…KEQKPPQASG (139 aa)) is disordered. S435 is modified (phosphoserine). The span at 457–469 (SGYYSSPEPSESG) shows a compositional bias: low complexity. Residues S523, S544, S547, and S573 each carry the phosphoserine modification. Residues 531–562 (RPLARASRPSGAVSEDSILSSESFDQLDLPER) are disordered.

The protein belongs to the protein kinase superfamily. CAMK Ser/Thr protein kinase family. SNF1 subfamily. The cofactor is Mg(2+). In terms of processing, phosphorylated at Thr-208 by STK11/LKB1 in complex with STE20-related adapter-alpha (STRADA) pseudo kinase and CAB39. Autophosphorylation is also possible at Thr-208.

It catalyses the reaction L-seryl-[protein] + ATP = O-phospho-L-seryl-[protein] + ADP + H(+). The enzyme catalyses L-threonyl-[protein] + ATP = O-phospho-L-threonyl-[protein] + ADP + H(+). Its activity is regulated as follows. Activated by phosphorylation on Thr-208. Functionally, stress-activated kinase involved in tolerance to glucose starvation. Induces cell-cell detachment by increasing F-actin conversion to G-actin. Expression is induced by CD95 or TNF-alpha, via NF-kappa-B. Protects cells from CD95-mediated apoptosis and is required for the increased motility and invasiveness of CD95-activated tumor cells. Phosphorylates LATS1 and LATS2. Plays a key role in neural tube closure during embryonic development through LATS2 phosphorylation and regulation of the nuclear localization of YAP1 a critical downstream regulatory target in the Hippo signaling pathway. The chain is NUAK family SNF1-like kinase 2 from Homo sapiens (Human).